The following is a 304-amino-acid chain: Non-specific ribonucleoside hydrolase RihC (304 aa).

Residue H233 is part of the active site.

The protein belongs to the IUNH family. RihC subfamily.

In terms of biological role, hydrolyzes both purine and pyrimidine ribonucleosides with a broad-substrate specificity. The sequence is that of Non-specific ribonucleoside hydrolase RihC from Escherichia coli (strain 55989 / EAEC).